Reading from the N-terminus, the 38-residue chain is Large ribosomal subunit protein bL36 (38 aa).

Belongs to the bacterial ribosomal protein bL36 family.

The chain is Large ribosomal subunit protein bL36 from Psychrobacter arcticus (strain DSM 17307 / VKM B-2377 / 273-4).